The chain runs to 92 residues: Probable Fe(2+)-trafficking protein (92 aa).

This sequence belongs to the Fe(2+)-trafficking protein family.

Its function is as follows. Could be a mediator in iron transactions between iron acquisition and iron-requiring processes, such as synthesis and/or repair of Fe-S clusters in biosynthetic enzymes. The protein is Probable Fe(2+)-trafficking protein of Shewanella pealeana (strain ATCC 700345 / ANG-SQ1).